The chain runs to 136 residues: MTSLSRPRVEFISTILQTVLNLGLLCLGLILVVFLGKETVHLADVLFAPEQASKYELVEGLVVYFLYFEFIALIVKYFQSGFHFPLRYFVYIGITAIVRLIIVDHKSPLDVLIYSAAILLLVITLWLCNSKRLKRE.

4 helical membrane passes run 15 to 35 (ILQT…VVFL), 55 to 75 (YELV…ALIV), 82 to 102 (FHFP…RLII), and 108 to 128 (PLDV…LWLC).

This sequence belongs to the PsiE family.

Its subcellular location is the cell inner membrane. This Escherichia coli (strain UTI89 / UPEC) protein is Protein PsiE.